We begin with the raw amino-acid sequence, 292 residues long: E3 ubiquitin-protein ligase RNF144A (292 aa).

The tract at residues 16–236 (PLVSCKLCLG…YDKGPCRNKL (221 aa)) is TRIAD supradomain. Zn(2+)-binding residues include cysteine 20, cysteine 23, cysteine 43, cysteine 46, cysteine 111, cysteine 116, cysteine 135, cysteine 138, cysteine 143, cysteine 146, histidine 151, cysteine 156, cysteine 185, and cysteine 188. The segment at 20–70 (CKLCLGEYPVEQMTTIAQCQCIFCTLCLKQYVELLIKEGLETAISCPDAAC) adopts an RING-type 1 zinc-finger fold. The segment at 91–156 (QRYKKLQFER…KASWHPGQGC (66 aa)) adopts an IBR-type zinc-finger fold. An RING-type 2; atypical zinc finger spans residues 185–214 (CPKCKVYIERDEGCAQMMCKNCKHAFCWYC). Cysteine 198 is an active-site residue. Positions 203, 206, 211, 214, 226, and 232 each coordinate Zn(2+). A helical membrane pass occupies residues 250 to 270 (VVGIFAGFGLLLLVASPFLLL).

The protein belongs to the RBR family. RNF144 subfamily. In terms of assembly, self-associates. Interacts with UBE2L3. Post-translationally, auto-ubiquitinated.

It is found in the cell membrane. Its subcellular location is the cytoplasmic vesicle membrane. The protein localises to the endosome membrane. The protein resides in the endoplasmic reticulum membrane. The enzyme catalyses [E2 ubiquitin-conjugating enzyme]-S-ubiquitinyl-L-cysteine + [acceptor protein]-L-lysine = [E2 ubiquitin-conjugating enzyme]-L-cysteine + [acceptor protein]-N(6)-ubiquitinyl-L-lysine.. It functions in the pathway protein modification; protein ubiquitination. In terms of biological role, E3 ubiquitin-protein ligase which accepts ubiquitin from E2 ubiquitin-conjugating enzymes UBE2L3 and UBE2L6 in the form of a thioester and then directly transfers the ubiquitin to targeted substrates. Mediates the ubiquitination and degradation of the DNA damage kinase PRKDC during DNA damage. Positively regulates DNA virus or exogenous cytosolic DNA-triggered innate immune response by mediating STING1 ubiquitination and increasing its 'Lys-6'-linked ubiquitination and translocation from the endoplasmic reticulum to the Golgi leading to downstream signaling pathways. Plays a positive role in EGF-dependent cell proliferation by prolonging EGF/EGFR signaling during EGF stimulation through EGFR ubiquitination. Increases ERK activity independently of EGFR signaling by promoting polyubiquitination and subsequent degradation of VRK3 in the cytosol. This chain is E3 ubiquitin-protein ligase RNF144A (RNF144A), found in Homo sapiens (Human).